The chain runs to 378 residues: Putative F-box only protein 15 (378 aa).

An F-box domain is found at 5 to 52 (KRVYRSLPFELVEEILKKTPAESLNRFKSTCKQWYGIITSKRFMYNHL).

The polypeptide is Putative F-box only protein 15 (FBX15) (Arabidopsis thaliana (Mouse-ear cress)).